The following is a 566-amino-acid chain: Putative ABC transporter ATP-binding protein lp_0149 (566 aa).

ABC transporter domains are found at residues Ile6–Glu247 and Leu302–Ala536. ATP is bound by residues Gly40–Ser47 and Gly335–Ser342.

It belongs to the ABC transporter superfamily.

It is found in the cell membrane. In terms of biological role, probably part of an ABC transporter complex. Responsible for energy coupling to the transport system. This chain is Putative ABC transporter ATP-binding protein lp_0149, found in Lactiplantibacillus plantarum (strain ATCC BAA-793 / NCIMB 8826 / WCFS1) (Lactobacillus plantarum).